Consider the following 172-residue polypeptide: R-phycocyanin-1 beta chain (172 aa).

N4-methylasparagine is present on Asn-72. Cys-82 is a (2R,3E)-phycocyanobilin binding site. A (2R,3E)-phycoerythrobilin-binding site is contributed by Cys-153.

Belongs to the phycobiliprotein family. Heterodimer of an alpha and a beta chain. Dimers further assemble into trimers and the trimers into hexamers. The basic functional unit of phycobiliproteins is a ring-shaped hexamer formed from two back-to-back trimers contacting via the alpha chain subunits. The trimers are composed of alpha/beta subunit heterodimers arranged around a three-fold axis of symmetry. The phycoerythrins also contain a gamma subunit which is located in the center of the hexamer. Contains two covalently linked bilin chromophores.

The protein localises to the plastid. It localises to the chloroplast thylakoid membrane. Functionally, light-harvesting photosynthetic bile pigment-protein from the phycobiliprotein complex (phycobilisome, PBS). Phycocyanin is the major phycobiliprotein in the PBS rod. This chain is R-phycocyanin-1 beta chain (rpcB), found in Porphyridium purpureum (Red alga).